The following is a 380-amino-acid chain: Large ribosomal subunit protein mL38 (380 aa).

The N-terminal 26 residues, 1–26, are a transit peptide targeting the mitochondrion; sequence MAAPWWRAALCECRRWRGFSTSAVLG. Residues 99–127 are a coiled coil; that stretch reads RTQQLLERKQAIQELRANVEEERAARLRT.

The protein belongs to the phosphatidylethanolamine-binding protein family. Mitochondrion-specific ribosomal protein mL38 subfamily. Component of the mitochondrial large ribosomal subunit (mt-LSU). Mature mammalian 55S mitochondrial ribosomes consist of a small (28S) and a large (39S) subunit. The 28S small subunit contains a 12S ribosomal RNA (12S mt-rRNA) and 30 different proteins. The 39S large subunit contains a 16S rRNA (16S mt-rRNA), a copy of mitochondrial valine transfer RNA (mt-tRNA(Val)), which plays an integral structural role, and 52 different proteins. mL38 is located at the central protuberance.

It localises to the mitochondrion. The protein is Large ribosomal subunit protein mL38 (MRPL38) of Homo sapiens (Human).